A 63-amino-acid chain; its full sequence is Large ribosomal subunit protein uL29 (63 aa).

This sequence belongs to the universal ribosomal protein uL29 family.

The polypeptide is Large ribosomal subunit protein uL29 (Hahella chejuensis (strain KCTC 2396)).